We begin with the raw amino-acid sequence, 367 residues long: 4-hydroxy-3-methylbut-2-en-1-yl diphosphate synthase (flavodoxin) (367 aa).

[4Fe-4S] cluster-binding residues include C268, C271, C303, and E310.

Belongs to the IspG family. Requires [4Fe-4S] cluster as cofactor.

The enzyme catalyses (2E)-4-hydroxy-3-methylbut-2-enyl diphosphate + oxidized [flavodoxin] + H2O + 2 H(+) = 2-C-methyl-D-erythritol 2,4-cyclic diphosphate + reduced [flavodoxin]. Its pathway is isoprenoid biosynthesis; isopentenyl diphosphate biosynthesis via DXP pathway; isopentenyl diphosphate from 1-deoxy-D-xylulose 5-phosphate: step 5/6. Converts 2C-methyl-D-erythritol 2,4-cyclodiphosphate (ME-2,4cPP) into 1-hydroxy-2-methyl-2-(E)-butenyl 4-diphosphate. The chain is 4-hydroxy-3-methylbut-2-en-1-yl diphosphate synthase (flavodoxin) from Shouchella clausii (strain KSM-K16) (Alkalihalobacillus clausii).